The primary structure comprises 920 residues: Valine--tRNA ligase (920 aa).

The 'HIGH' region signature appears at 40-50; it reads PNVTGTLHMGH. The short motif at 522 to 526 is the 'KMSKS' region element; sequence KMSKS. Lys525 serves as a coordination point for ATP. Coiled-coil stretches lie at residues 642 to 668 and 849 to 920; these read EWIRTRLQQTIKNAEEALSQYRFDLLA and AGVI…IESL.

This sequence belongs to the class-I aminoacyl-tRNA synthetase family. ValS type 1 subfamily. Monomer.

The protein localises to the cytoplasm. It catalyses the reaction tRNA(Val) + L-valine + ATP = L-valyl-tRNA(Val) + AMP + diphosphate. Its function is as follows. Catalyzes the attachment of valine to tRNA(Val). As ValRS can inadvertently accommodate and process structurally similar amino acids such as threonine, to avoid such errors, it has a 'posttransfer' editing activity that hydrolyzes mischarged Thr-tRNA(Val) in a tRNA-dependent manner. The protein is Valine--tRNA ligase of Coxiella burnetii (strain RSA 493 / Nine Mile phase I).